A 609-amino-acid chain; its full sequence is Membrane protein insertase YidC (609 aa).

A helical membrane pass occupies residues 9–29; sequence IIAIVLSGLILIAWQYFYNIP. The segment at 35 to 63 is disordered; the sequence is RAAQQAQSQTAKSPTEPTPNSPKPDHPAA. The next 4 helical transmembrane spans lie at 375-395, 449-469, 507-527, and 546-566; these read VFGNFGIAILFVTVLIKAIFF, LPMVLQIPVFFSLYKVLFVTI, LLGPYLAIGAWPIIMGITMWF, and WMPVIFTFMLAAFPAGLVIYW.

Belongs to the OXA1/ALB3/YidC family. Type 1 subfamily. Interacts with the Sec translocase complex via SecD. Specifically interacts with transmembrane segments of nascent integral membrane proteins during membrane integration.

It localises to the cell inner membrane. Required for the insertion and/or proper folding and/or complex formation of integral membrane proteins into the membrane. Involved in integration of membrane proteins that insert both dependently and independently of the Sec translocase complex, as well as at least some lipoproteins. Aids folding of multispanning membrane proteins. The polypeptide is Membrane protein insertase YidC (Nitrobacter hamburgensis (strain DSM 10229 / NCIMB 13809 / X14)).